Reading from the N-terminus, the 188-residue chain is Pyridoxal 5'-phosphate synthase subunit PdxT (188 aa).

Residue 46-48 (GES) coordinates L-glutamine. Cys-78 functions as the Nucleophile in the catalytic mechanism. L-glutamine is bound by residues Arg-105 and 134–135 (IR). Residues His-170 and Glu-172 each act as charge relay system in the active site.

This sequence belongs to the glutaminase PdxT/SNO family. As to quaternary structure, in the presence of PdxS, forms a dodecamer of heterodimers. Only shows activity in the heterodimer.

It carries out the reaction aldehydo-D-ribose 5-phosphate + D-glyceraldehyde 3-phosphate + L-glutamine = pyridoxal 5'-phosphate + L-glutamate + phosphate + 3 H2O + H(+). It catalyses the reaction L-glutamine + H2O = L-glutamate + NH4(+). Its pathway is cofactor biosynthesis; pyridoxal 5'-phosphate biosynthesis. Catalyzes the hydrolysis of glutamine to glutamate and ammonia as part of the biosynthesis of pyridoxal 5'-phosphate. The resulting ammonia molecule is channeled to the active site of PdxS. The protein is Pyridoxal 5'-phosphate synthase subunit PdxT of Thermotoga sp. (strain RQ2).